The sequence spans 395 residues: MAKLGTPLSPSATRVLLLGSGELGKEVAIELQRLGVEVIAADRYADAPAMQVAHRSHVIDMLDAMALRALIAQEQPHLVVPEIEAIHTETLVQLEQEQGLRVIPTARAARLTMDREGIRRLAAETLGLPTSPYRFVDTEAEYRAAVAAIGLPCVVKPVMSSSGKGQSTLRSEAEIAPAWEYAQTGGRAGAGRCIVEGFIDFDYEITLLTVRHAGGTSFCAPIGHLQKDGDYRESWQPQPMSSAALARAEEISRAITDDLGGWGLFGVELFVKGDEVWFSEVSPRPHDTGLVTLVSQELSEFALHARAILGLPIPVIRQSGPSASCALLAHGEGVPYFNNVAAALQVPDTAVRLFGKPSVHGHRRVGVTLARAETIDEARAIARDAAEAIGVELRP.

N(1)-(5-phospho-beta-D-ribosyl)glycinamide contacts are provided by residues 22–23 (EL) and E82. ATP is bound by residues R115, K156, 161-166 (SSGKGQ), 196-199 (EGFI), and E204. One can recognise an ATP-grasp domain in the interval 120–309 (RLAAETLGLP…EFALHARAIL (190 aa)). Mg(2+) contacts are provided by E268 and E280. Residues D287, K356, and 363–364 (RR) each bind N(1)-(5-phospho-beta-D-ribosyl)glycinamide.

Belongs to the PurK/PurT family. Homodimer.

It catalyses the reaction N(1)-(5-phospho-beta-D-ribosyl)glycinamide + formate + ATP = N(2)-formyl-N(1)-(5-phospho-beta-D-ribosyl)glycinamide + ADP + phosphate + H(+). Its pathway is purine metabolism; IMP biosynthesis via de novo pathway; N(2)-formyl-N(1)-(5-phospho-D-ribosyl)glycinamide from N(1)-(5-phospho-D-ribosyl)glycinamide (formate route): step 1/1. Functionally, involved in the de novo purine biosynthesis. Catalyzes the transfer of formate to 5-phospho-ribosyl-glycinamide (GAR), producing 5-phospho-ribosyl-N-formylglycinamide (FGAR). Formate is provided by PurU via hydrolysis of 10-formyl-tetrahydrofolate. This is Formate-dependent phosphoribosylglycinamide formyltransferase from Stenotrophomonas maltophilia (strain K279a).